The primary structure comprises 115 residues: Large ribosomal subunit protein bL31B (115 aa).

The protein belongs to the bacterial ribosomal protein bL31 family. Type B subfamily. As to quaternary structure, part of the 50S ribosomal subunit.

This chain is Large ribosomal subunit protein bL31B, found in Polynucleobacter necessarius subsp. necessarius (strain STIR1).